The sequence spans 134 residues: MKHADLSQRQLRVGEQVRHALAHMLQRGILLDDALKDVVFSVSEVRMSPDLKIATCFVSFLNTVDDISRATLIKVLNKHSRFIRGEISSSLRQMKYMPELRFRLDNSFDNFSKIDALLRLPEVARDLHHHKPED.

Belongs to the RbfA family. In terms of assembly, monomer. Binds 30S ribosomal subunits, but not 50S ribosomal subunits or 70S ribosomes.

It localises to the cytoplasm. One of several proteins that assist in the late maturation steps of the functional core of the 30S ribosomal subunit. Associates with free 30S ribosomal subunits (but not with 30S subunits that are part of 70S ribosomes or polysomes). Required for efficient processing of 16S rRNA. May interact with the 5'-terminal helix region of 16S rRNA. This is Ribosome-binding factor A from Bartonella bacilliformis (strain ATCC 35685 / KC583 / Herrer 020/F12,63).